Here is a 498-residue protein sequence, read N- to C-terminus: Glycerol kinase (498 aa).

T12 provides a ligand contact to ADP. ATP-binding residues include T12, T13, and S14. T12 serves as a coordination point for sn-glycerol 3-phosphate. Position 16 (R16) interacts with ADP. The sn-glycerol 3-phosphate site is built by R82, E83, and Y134. Glycerol is bound by residues R82, E83, and Y134. Phosphohistidine; by HPr is present on H230. Residue D244 coordinates sn-glycerol 3-phosphate. Glycerol is bound by residues D244 and Q245. Residues T266 and G309 each contribute to the ADP site. T266, G309, Q313, and G410 together coordinate ATP. The ADP site is built by G410 and N414.

Belongs to the FGGY kinase family. As to quaternary structure, homotetramer and homodimer (in equilibrium). The phosphoenolpyruvate-dependent sugar phosphotransferase system (PTS), including enzyme I, and histidine-containing protein (HPr) are required for the phosphorylation, which leads to the activation of the enzyme.

The enzyme catalyses glycerol + ATP = sn-glycerol 3-phosphate + ADP + H(+). Its pathway is polyol metabolism; glycerol degradation via glycerol kinase pathway; sn-glycerol 3-phosphate from glycerol: step 1/1. Activated by phosphorylation and inhibited by fructose 1,6-bisphosphate (FBP). Its function is as follows. Key enzyme in the regulation of glycerol uptake and metabolism. Catalyzes the phosphorylation of glycerol to yield sn-glycerol 3-phosphate. The polypeptide is Glycerol kinase (Staphylococcus aureus (strain MW2)).